A 135-amino-acid chain; its full sequence is Photosystem II extrinsic protein U (135 aa).

Positions 1–29 (MKRLLSWLTGALLMAGLLAGLILPGSVHA) are cleaved as a signal peptide.

It belongs to the PsbU family. In terms of assembly, PSII is composed of 1 copy each of membrane proteins PsbA, PsbB, PsbC, PsbD, PsbE, PsbF, PsbH, PsbI, PsbJ, PsbK, PsbL, PsbM, PsbT, PsbX, PsbY, Psb30/Ycf12, peripheral proteins PsbO, CyanoQ (PsbQ), PsbU, PsbV and a large number of cofactors. It forms dimeric complexes.

It is found in the cellular thylakoid membrane. One of the extrinsic, lumenal subunits of photosystem II (PSII). PSII is a light-driven water plastoquinone oxidoreductase, using light energy to abstract electrons from H(2)O, generating a proton gradient subsequently used for ATP formation. The extrinsic proteins stabilize the structure of photosystem II oxygen-evolving complex (OEC), the ion environment of oxygen evolution and protect the OEC against heat-induced inactivation. The sequence is that of Photosystem II extrinsic protein U from Parasynechococcus marenigrum (strain WH8102).